The chain runs to 189 residues: GTP cyclohydrolase 1 (189 aa).

Cys-78, His-81, and Cys-150 together coordinate Zn(2+).

The protein belongs to the GTP cyclohydrolase I family. As to quaternary structure, toroid-shaped homodecamer, composed of two pentamers of five dimers.

It catalyses the reaction GTP + H2O = 7,8-dihydroneopterin 3'-triphosphate + formate + H(+). Its pathway is cofactor biosynthesis; 7,8-dihydroneopterin triphosphate biosynthesis; 7,8-dihydroneopterin triphosphate from GTP: step 1/1. The sequence is that of GTP cyclohydrolase 1 from Listeria monocytogenes serovar 1/2a (strain ATCC BAA-679 / EGD-e).